The sequence spans 67 residues: ATP synthase F(0) complex subunit 8 (67 aa).

Residues Thr8–Phe24 traverse the membrane as a helical segment. Lys54 is modified (N6-acetyllysine; alternate). Lys54 bears the N6-succinyllysine; alternate mark. Lys57 is subject to N6-acetyllysine.

The protein belongs to the ATPase protein 8 family. Component of the ATP synthase complex composed at least of ATP5F1A/subunit alpha, ATP5F1B/subunit beta, ATP5MC1/subunit c (homooctomer), MT-ATP6/subunit a, MT-ATP8/subunit 8, ATP5ME/subunit e, ATP5MF/subunit f, ATP5MG/subunit g, ATP5MK/subunit k, ATP5MJ/subunit j, ATP5F1C/subunit gamma, ATP5F1D/subunit delta, ATP5F1E/subunit epsilon, ATP5PF/subunit F6, ATP5PB/subunit b, ATP5PD/subunit d, ATP5PO/subunit OSCP. ATP synthase complex consists of a soluble F(1) head domain (subunits alpha(3) and beta(3)) - the catalytic core - and a membrane F(0) domain - the membrane proton channel (subunits c, a, 8, e, f, g, k and j). These two domains are linked by a central stalk (subunits gamma, delta, and epsilon) rotating inside the F1 region and a stationary peripheral stalk (subunits F6, b, d, and OSCP). Interacts with PRICKLE3.

Its subcellular location is the mitochondrion membrane. In terms of biological role, subunit 8, of the mitochondrial membrane ATP synthase complex (F(1)F(0) ATP synthase or Complex V) that produces ATP from ADP in the presence of a proton gradient across the membrane which is generated by electron transport complexes of the respiratory chain. ATP synthase complex consist of a soluble F(1) head domain - the catalytic core - and a membrane F(1) domain - the membrane proton channel. These two domains are linked by a central stalk rotating inside the F(1) region and a stationary peripheral stalk. During catalysis, ATP synthesis in the catalytic domain of F(1) is coupled via a rotary mechanism of the central stalk subunits to proton translocation. In vivo, can only synthesize ATP although its ATP hydrolase activity can be activated artificially in vitro. Part of the complex F(0) domain. This is ATP synthase F(0) complex subunit 8 from Equus caballus (Horse).